Here is a 576-residue protein sequence, read N- to C-terminus: Cyclic nucleotide-binding domain-containing protein 2 (576 aa).

Residue 116-239 (SYRNYAEPLQ…DAQYRFEFFR (124 aa)) coordinates a nucleoside 3',5'-cyclic phosphate.

The protein localises to the cytoplasm. The protein resides in the cytosol. Essential for male fertility. Plays an important role in spermatogenesis and regulates sperm motility by controlling the development of the flagellar bending of sperm. The chain is Cyclic nucleotide-binding domain-containing protein 2 (CNBD2) from Homo sapiens (Human).